Consider the following 643-residue polypeptide: Threonine--tRNA ligase (643 aa).

The region spanning 1 to 61 (MIKITLKDGS…NEDSSLEICT (61 aa)) is the TGS domain. Positions 240 to 540 (DHNKLGRELG…LIEKYAGALP (301 aa)) are catalytic. 3 residues coordinate Zn(2+): Cys-335, His-386, and His-517.

It belongs to the class-II aminoacyl-tRNA synthetase family. Homodimer. The cofactor is Zn(2+).

Its subcellular location is the cytoplasm. It catalyses the reaction tRNA(Thr) + L-threonine + ATP = L-threonyl-tRNA(Thr) + AMP + diphosphate + H(+). Its function is as follows. Catalyzes the attachment of threonine to tRNA(Thr) in a two-step reaction: L-threonine is first activated by ATP to form Thr-AMP and then transferred to the acceptor end of tRNA(Thr). Also edits incorrectly charged L-seryl-tRNA(Thr). The polypeptide is Threonine--tRNA ligase (Clostridium perfringens (strain ATCC 13124 / DSM 756 / JCM 1290 / NCIMB 6125 / NCTC 8237 / Type A)).